A 151-amino-acid polypeptide reads, in one-letter code: Transcriptional regulator MraZ (151 aa).

2 SpoVT-AbrB domains span residues alanine 5 to glutamate 52 and alanine 81 to alanine 124.

Belongs to the MraZ family. Forms oligomers.

The protein localises to the cytoplasm. The protein resides in the nucleoid. This Pseudomonas fluorescens (strain Pf0-1) protein is Transcriptional regulator MraZ.